The sequence spans 340 residues: Tetraacyldisaccharide 4'-kinase (340 aa).

51-58 (HMGGAGKT) contributes to the ATP binding site.

The protein belongs to the LpxK family.

The enzyme catalyses a lipid A disaccharide + ATP = a lipid IVA + ADP + H(+). It participates in glycolipid biosynthesis; lipid IV(A) biosynthesis; lipid IV(A) from (3R)-3-hydroxytetradecanoyl-[acyl-carrier-protein] and UDP-N-acetyl-alpha-D-glucosamine: step 6/6. Transfers the gamma-phosphate of ATP to the 4'-position of a tetraacyldisaccharide 1-phosphate intermediate (termed DS-1-P) to form tetraacyldisaccharide 1,4'-bis-phosphate (lipid IVA). This is Tetraacyldisaccharide 4'-kinase from Rhodopseudomonas palustris (strain ATCC BAA-98 / CGA009).